The following is a 417-amino-acid chain: D-amino acid dehydrogenase (417 aa).

Position 3 to 17 (3 to 17 (IIVLGAGVIGVTSAY)) interacts with FAD.

Belongs to the DadA oxidoreductase family. FAD serves as cofactor.

It carries out the reaction a D-alpha-amino acid + A + H2O = a 2-oxocarboxylate + AH2 + NH4(+). The protein operates within amino-acid degradation; D-alanine degradation; NH(3) and pyruvate from D-alanine: step 1/1. Oxidative deamination of D-amino acids. In Azorhizobium caulinodans (strain ATCC 43989 / DSM 5975 / JCM 20966 / LMG 6465 / NBRC 14845 / NCIMB 13405 / ORS 571), this protein is D-amino acid dehydrogenase.